The sequence spans 55 residues: Large ribosomal subunit protein bL33 (55 aa).

This sequence belongs to the bacterial ribosomal protein bL33 family.

The sequence is that of Large ribosomal subunit protein bL33 from Caulobacter sp. (strain K31).